We begin with the raw amino-acid sequence, 1195 residues long: DNA-directed RNA polymerase subunit Rpo2 (1195 aa).

Residues 894 to 909 (LEEGEERLGPQRRRES) show a composition bias toward basic and acidic residues. The disordered stretch occupies residues 894-914 (LEEGEERLGPQRRRESSVTMR). The Zn(2+) site is built by cysteine 1135, cysteine 1140, cysteine 1155, and cysteine 1158.

This sequence belongs to the RNA polymerase beta chain family. Part of the RNA polymerase complex. Requires Zn(2+) as cofactor.

The protein resides in the cytoplasm. The enzyme catalyses RNA(n) + a ribonucleoside 5'-triphosphate = RNA(n+1) + diphosphate. DNA-dependent RNA polymerase (RNAP) catalyzes the transcription of DNA into RNA using the four ribonucleoside triphosphates as substrates. This subunit is involved in DNA promoter recognition. In Thermoplasma acidophilum (strain ATCC 25905 / DSM 1728 / JCM 9062 / NBRC 15155 / AMRC-C165), this protein is DNA-directed RNA polymerase subunit Rpo2.